We begin with the raw amino-acid sequence, 760 residues long: DNA replication licensing factor mcm7 (760 aa).

Residues 353–559 (VYEKLAKSIA…ETDEHLAQHV (207 aa)) enclose the MCM domain. Residues Tyr-366, Gly-406, Ala-408, Lys-409, Ser-410, Asn-511, Arg-536, and Arg-630 each coordinate ATP. Residues 535 to 538 (SRFD) carry the Arginine finger motif.

It belongs to the MCM family. In terms of assembly, component of the mcm2-7 complex. The complex forms a toroidal hexameric ring with the proposed subunit order mcm2-mcm6-mcm4-mcm7-mcm3-mcm5. The heterodimers of mcm4/mcm6 and mcm3/mcm5 interact with mcm2 and mcm7. Interacts with sld3 and mcm10.

It is found in the nucleus. It catalyses the reaction ATP + H2O = ADP + phosphate + H(+). In terms of biological role, acts as a component of the MCM2-7 complex (MCM complex) which is the replicative helicase essential for 'once per cell cycle' DNA replication initiation and elongation in eukaryotic cells. Core component of CDC45-MCM-GINS (CMG) helicase, the molecular machine that unwinds template DNA during replication, and around which the replisome is built. The active ATPase sites in the MCM2-7 ring are formed through the interaction surfaces of two neighboring subunits such that a critical structure of a conserved arginine finger motif is provided in trans relative to the ATP-binding site of the Walker A box of the adjacent subunit. The six ATPase active sites, however, are likely to contribute differentially to the complex helicase activity. Required for the progression of S phase. The polypeptide is DNA replication licensing factor mcm7 (mcm7) (Schizosaccharomyces pombe (strain 972 / ATCC 24843) (Fission yeast)).